A 47-amino-acid chain; its full sequence is Large ribosomal subunit protein bL34 (47 aa).

This sequence belongs to the bacterial ribosomal protein bL34 family.

This Nocardia farcinica (strain IFM 10152) protein is Large ribosomal subunit protein bL34.